The chain runs to 111 residues: Universal stress protein B (111 aa).

The next 2 membrane-spanning stretches (helical) occupy residues 1–21 and 90–110; these read MIST…NMAR and FILT…LMIW.

Belongs to the universal stress protein B family.

The protein localises to the cell inner membrane. The sequence is that of Universal stress protein B from Escherichia coli O45:K1 (strain S88 / ExPEC).